We begin with the raw amino-acid sequence, 532 residues long: T-complex protein 1 subunit beta (532 aa).

Belongs to the TCP-1 chaperonin family. In terms of assembly, heterooligomeric complex of about 850 to 900 kDa that forms two stacked rings, 12 to 16 nm in diameter.

The protein localises to the cytoplasm. Molecular chaperone; assists the folding of proteins upon ATP hydrolysis. Known to play a role, in vitro, in the folding of actin and tubulin. The protein is T-complex protein 1 subunit beta (cct2) of Dictyostelium discoideum (Social amoeba).